The sequence spans 346 residues: 3-keto-steroid reductase ERG27 (346 aa).

The NADP(+) site is built by leucine 19, threonine 42, and lysine 48. Active-site proton donor residues include serine 182 and tyrosine 205. Positions 205, 209, and 241 each coordinate NADP(+). Residue lysine 209 is the Lowers pKa of active site Tyr of the active site. Residues 242–262 (FSFFQYLNVFTYYGMLFLFYL) form a helical membrane-spanning segment. N-linked (GlcNAc...) asparagine glycosylation is present at asparagine 272.

This sequence belongs to the short-chain dehydrogenases/reductases (SDR) family. ERG27 subfamily. As to quaternary structure, heterotetramer of ERG25, ERG26, ERG27 and ERG28. ERG28 acts as a scaffold to tether ERG27 and other 4,4-demethylation-related enzymes, forming a demethylation enzyme complex, in the endoplasmic reticulum. Interacts with ERG25 and ERG28. Also interacts with ERG7, but only in lipid particles.

The protein resides in the endoplasmic reticulum membrane. The protein localises to the lipid droplet. The enzyme catalyses 3-dehydro-4alpha-methylzymosterol + NADPH + H(+) = 4alpha-methylzymosterol + NADP(+). Its pathway is steroid biosynthesis; zymosterol biosynthesis; zymosterol from lanosterol: step 5/6. Functionally, 3-keto-steroid reductase; part of the third module of ergosterol biosynthesis pathway that includes the late steps of the pathway. ERG27 is a catalytic component of the C-4 demethylation complex that catalyzes the reduction of the keto group on the C-3. The third module or late pathway involves the ergosterol synthesis itself through consecutive reactions that mainly occur in the endoplasmic reticulum (ER) membrane. Firstly, the squalene synthase ERG9 catalyzes the condensation of 2 farnesyl pyrophosphate moieties to form squalene, which is the precursor of all steroids. Squalene synthase is crucial for balancing the incorporation of farnesyl diphosphate (FPP) into sterol and nonsterol isoprene synthesis. Secondly, the squalene epoxidase ERG1 catalyzes the stereospecific oxidation of squalene to (S)-2,3-epoxysqualene, which is considered to be a rate-limiting enzyme in steroid biosynthesis. Then, the lanosterol synthase ERG7 catalyzes the cyclization of (S)-2,3 oxidosqualene to lanosterol, a reaction that forms the sterol core. In the next steps, lanosterol is transformed to zymosterol through a complex process involving various demethylation, reduction and desaturation reactions. The lanosterol 14-alpha-demethylase ERG11 (also known as CYP51) catalyzes C14-demethylation of lanosterol to produce 4,4'-dimethyl cholesta-8,14,24-triene-3-beta-ol, which is critical for ergosterol biosynthesis. The C-14 reductase ERG24 reduces the C14=C15 double bond of 4,4-dimethyl-cholesta-8,14,24-trienol to produce 4,4-dimethyl-cholesta-8,24-dienol. 4,4-dimethyl-cholesta-8,24-dienol is substrate of the C-4 demethylation complex ERG25-ERG26-ERG27 in which ERG25 catalyzes the three-step monooxygenation required for the demethylation of 4,4-dimethyl and 4alpha-methylsterols, ERG26 catalyzes the oxidative decarboxylation that results in a reduction of the 3-beta-hydroxy group at the C-3 carbon to an oxo group, and ERG27 is responsible for the reduction of the keto group on the C-3. ERG28 has a role as a scaffold to help anchor ERG25, ERG26 and ERG27 to the endoplasmic reticulum and ERG29 regulates the activity of the iron-containing C4-methylsterol oxidase ERG25. Then, the sterol 24-C-methyltransferase ERG6 catalyzes the methyl transfer from S-adenosyl-methionine to the C-24 of zymosterol to form fecosterol. The C-8 sterol isomerase ERG2 catalyzes the reaction which results in unsaturation at C-7 in the B ring of sterols and thus converts fecosterol to episterol. The sterol-C5-desaturase ERG3 then catalyzes the introduction of a C-5 double bond in the B ring to produce 5-dehydroepisterol. The C-22 sterol desaturase ERG5 further converts 5-dehydroepisterol into ergosta-5,7,22,24(28)-tetraen-3beta-ol by forming the C-22(23) double bond in the sterol side chain. Finally, ergosta-5,7,22,24(28)-tetraen-3beta-ol is substrate of the C-24(28) sterol reductase ERG4 to produce ergosterol. Its function is as follows. Facilitates the association of ERG7 with lipid particles preventing its digestion in the endoplasmic reticulum and the lipid particles. In Candida albicans (Yeast), this protein is 3-keto-steroid reductase ERG27.